The primary structure comprises 421 residues: Synaptotagmin-1 (421 aa).

Residues 1 to 57 (MVSASHPEALAAPVTTVATLVPHNATEPASPGEGKEDAFSKLKQKFMNELHKIPLPP) are Vesicular-facing. N-linked (GlcNAc...) asparagine glycosylation is present at asparagine 24. The chain crosses the membrane as a helical span at residues 58–79 (WALIAIAIVAVLLVVTCCFCVC). S-palmitoyl cysteine attachment occurs at residues cysteine 74, cysteine 75, cysteine 77, cysteine 79, and cysteine 82. At 80–421 (KKCLFKKKNK…EVDAMLAVKK (342 aa)) the chain is on the cytoplasmic side. The interval 112–141 (TMKDQALKDDDAETGLTDGEEKEEPKEEEK) is disordered. A compositionally biased stretch (acidic residues) spans 121–133 (DDAETGLTDGEEK). Threonine 128 is modified (phosphothreonine). The segment at 135–381 (EPKEEEKLGK…AIGKVFVGYN (247 aa)) is phospholipid binding. Residues 141 to 260 (KLGKLQYSLD…DFGHVTEEWR (120 aa)) enclose the C2 1 domain. Ca(2+) contacts are provided by leucine 171, aspartate 172, and aspartate 178. Tyrosine 229 bears the Phosphotyrosine mark. 6 residues coordinate Ca(2+): aspartate 230, phenylalanine 231, aspartate 232, serine 235, lysine 236, and aspartate 238. Serine 264 is modified (phosphoserine). The region spanning 272-405 (KLGDICFSLR…NPRRPIAQWH (134 aa)) is the C2 2 domain. Ca(2+)-binding residues include aspartate 303 and aspartate 309. Phosphoserine occurs at positions 342 and 344. Ca(2+) contacts are provided by aspartate 363, aspartate 365, and aspartate 371.

Belongs to the synaptotagmin family. As to quaternary structure, homotetramer. Heterodimer; heterodimerizes with SYT2 in presence of calcium. Interacts with SCAMP5. Interacts with STON2. Forms a complex with SV2B, syntaxin 1 and SNAP25. Interacts with SV2A, SV2B and SV2C. Interacts with RIMS1. Interacts with PRRT2. Interacts with DNAJC5 in a phosphorylation-dependent manner. Interacts (via N-terminus) with RAB3A. Interacts with SYT12. Interacts with calmodulin. Interacts with DNM1 (via C-terminal proline-rich domain (PRD)); this interaction facilitates vesicle fission during clathrin-mediated endocytosis (CME). In terms of assembly, (Microbial infection) Interacts with C.botulinum neurotoxin type B (BoNT/B, botB). Has lower affinity for BoNT/B than Syt2; mutating its residues to match those in Syt2 increases its affinity. (Microbial infection) Interacts with C.botulinum neurotoxin type G (BoNT/G, botG). Ca(2+) serves as cofactor. In terms of processing, glycosylated. In terms of tissue distribution, expressed in the brain (at protein level). Predominantly expressed in rostral, phylogenetically younger brain regions, and in some endocrine tissues.

Its subcellular location is the cytoplasmic vesicle. It localises to the secretory vesicle membrane. The protein resides in the secretory vesicle. It is found in the synaptic vesicle membrane. The protein localises to the chromaffin granule membrane. Its subcellular location is the cytoplasm. Calcium sensor that participates in triggering neurotransmitter release at the synapse. May have a regulatory role in the membrane interactions during trafficking of synaptic vesicles at the active zone of the synapse. It binds acidic phospholipids with a specificity that requires the presence of both an acidic head group and a diacyl backbone. A Ca(2+)-dependent interaction between synaptotagmin and putative receptors for activated protein kinase C has also been reported. It can bind to at least three additional proteins in a Ca(2+)-independent manner; these are neurexins, syntaxin and AP2. Plays a role in dendrite formation by melanocytes. Its function is as follows. (Microbial infection) Receptor for C.botulinum neurotoxin type B (BoNT/B, botB); interaction is improved in the presence of gangliosides. BoNT/B toxin binds to the membrane proximal vesicular domain of Syt1 (residues 32-51). Functionally, (Microbial infection) Receptor for C.botulinum neurotoxin type G (BoNT/G, botG); unlike the case with BoNT/B, interaction is not improved in the presence of gangliosides. BoNT/G toxin binds to the vesicular domain of Syt1 (residues 32-53). The polypeptide is Synaptotagmin-1 (Rattus norvegicus (Rat)).